The chain runs to 460 residues: Bifunctional protein GlmU (460 aa).

Residues 1–232 (MENVAAIILA…SDEIMGVNDR (232 aa)) are pyrophosphorylase. UDP-N-acetyl-alpha-D-glucosamine contacts are provided by residues 9–12 (LAAG), lysine 23, glutamine 75, and 80–81 (GT). Aspartate 105 provides a ligand contact to Mg(2+). 4 residues coordinate UDP-N-acetyl-alpha-D-glucosamine: glycine 142, glutamate 157, asparagine 172, and asparagine 230. Residue asparagine 230 coordinates Mg(2+). The interval 233–253 (AQLAQAARILRRRINRDLMLS) is linker. The N-acetyltransferase stretch occupies residues 254 to 460 (GVSLVDPEQT…GWRIRMKKKT (207 aa)). UDP-N-acetyl-alpha-D-glucosamine is bound by residues arginine 336 and lysine 354. Histidine 366 functions as the Proton acceptor in the catalytic mechanism. Residues tyrosine 369 and asparagine 380 each contribute to the UDP-N-acetyl-alpha-D-glucosamine site. Acetyl-CoA contacts are provided by residues 389–390 (NY), serine 408, alanine 426, and arginine 443.

This sequence in the N-terminal section; belongs to the N-acetylglucosamine-1-phosphate uridyltransferase family. The protein in the C-terminal section; belongs to the transferase hexapeptide repeat family. Homotrimer. Requires Mg(2+) as cofactor.

It localises to the cytoplasm. The enzyme catalyses alpha-D-glucosamine 1-phosphate + acetyl-CoA = N-acetyl-alpha-D-glucosamine 1-phosphate + CoA + H(+). The catalysed reaction is N-acetyl-alpha-D-glucosamine 1-phosphate + UTP + H(+) = UDP-N-acetyl-alpha-D-glucosamine + diphosphate. The protein operates within nucleotide-sugar biosynthesis; UDP-N-acetyl-alpha-D-glucosamine biosynthesis; N-acetyl-alpha-D-glucosamine 1-phosphate from alpha-D-glucosamine 6-phosphate (route II): step 2/2. Its pathway is nucleotide-sugar biosynthesis; UDP-N-acetyl-alpha-D-glucosamine biosynthesis; UDP-N-acetyl-alpha-D-glucosamine from N-acetyl-alpha-D-glucosamine 1-phosphate: step 1/1. It functions in the pathway bacterial outer membrane biogenesis; LPS lipid A biosynthesis. Functionally, catalyzes the last two sequential reactions in the de novo biosynthetic pathway for UDP-N-acetylglucosamine (UDP-GlcNAc). The C-terminal domain catalyzes the transfer of acetyl group from acetyl coenzyme A to glucosamine-1-phosphate (GlcN-1-P) to produce N-acetylglucosamine-1-phosphate (GlcNAc-1-P), which is converted into UDP-GlcNAc by the transfer of uridine 5-monophosphate (from uridine 5-triphosphate), a reaction catalyzed by the N-terminal domain. The chain is Bifunctional protein GlmU from Pelobacter propionicus (strain DSM 2379 / NBRC 103807 / OttBd1).